Reading from the N-terminus, the 209-residue chain is Protein phosphotransferase ChpT (209 aa).

Position 22 is a phosphohistidine (histidine 22).

Belongs to the ChpT phosphotransferase family. Homodimer. Forms an asymmetric heterotetramer with CtrA (2:2). There are at least two modes of interaction between ChpT and CtrA, only one of which is competent to catalyze His-Asp phosphoryl transfer. Post-translationally, is phosphorylated by CckA-P on His-22.

The protein localises to the cytoplasm. Functionally, component of a regulatory phosphorelay system that controls B.abortus cell growth, division, and intracellular survival inside mammalian host cells. This signaling pathway is composed of CckA, ChpT, CtrA and CpdR. ChpT efficiently and specifically shuttles phosphoryl groups from the CckA kinase to the receiver domains of both CtrA and CpdR. Does not bind ATP. Overexpression of chpT results in a defect in cell morphology, DNA content, and intracellular survival in human macrophages. The sequence is that of Protein phosphotransferase ChpT from Brucella abortus (strain 2308).